A 58-amino-acid polypeptide reads, in one-letter code: UPF0391 membrane protein Sbal195_1447 (58 aa).

A run of 2 helical transmembrane segments spans residues 6–26 and 28–48; these read LVFLVVAVIAGLLGFTGIAGA and AGIAKIIFFVFIVLLVISLLV.

It belongs to the UPF0391 family.

Its subcellular location is the cell membrane. This Shewanella baltica (strain OS195) protein is UPF0391 membrane protein Sbal195_1447.